A 403-amino-acid chain; its full sequence is CCA-adding enzyme (403 aa).

Glycine 32 and arginine 35 together coordinate ATP. Glycine 32 and arginine 35 together coordinate CTP. Mg(2+) contacts are provided by aspartate 45 and aspartate 47. ATP-binding residues include arginine 116, aspartate 159, arginine 162, arginine 165, and arginine 168. 5 residues coordinate CTP: arginine 116, aspartate 159, arginine 162, arginine 165, and arginine 168.

Belongs to the tRNA nucleotidyltransferase/poly(A) polymerase family. Bacterial CCA-adding enzyme type 3 subfamily. In terms of assembly, homodimer. Requires Mg(2+) as cofactor.

It carries out the reaction a tRNA precursor + 2 CTP + ATP = a tRNA with a 3' CCA end + 3 diphosphate. The catalysed reaction is a tRNA with a 3' CCA end + 2 CTP + ATP = a tRNA with a 3' CCACCA end + 3 diphosphate. Catalyzes the addition and repair of the essential 3'-terminal CCA sequence in tRNAs without using a nucleic acid template. Adds these three nucleotides in the order of C, C, and A to the tRNA nucleotide-73, using CTP and ATP as substrates and producing inorganic pyrophosphate. tRNA 3'-terminal CCA addition is required both for tRNA processing and repair. Also involved in tRNA surveillance by mediating tandem CCA addition to generate a CCACCA at the 3' terminus of unstable tRNAs. While stable tRNAs receive only 3'-terminal CCA, unstable tRNAs are marked with CCACCA and rapidly degraded. This is CCA-adding enzyme from Limosilactobacillus reuteri (strain DSM 20016) (Lactobacillus reuteri).